A 211-amino-acid chain; its full sequence is MQELQYDVVLLQKIVYRNRNQHRLSVWWRHVRMLLRRLKQSLDGNEKAKIAILEQLPKSYFYFTNLIAHGQYPALGLVLLGILARVWFVMGGIEYEAKIQSEIVFSQKEQKKLELQSQDDIDTGTVVARDELLATEPISLSINPASTSYEKLTVSSPNSFLKNQDESLFLSSSPITVSQGTKRKSKNSNSTVKKKKKRARKGRDEIDDIFG.

A helical membrane pass occupies residues 73 to 93 (PALGLVLLGILARVWFVMGGI). At Ser156 the chain carries Phosphoserine. The disordered stretch occupies residues 178–211 (SQGTKRKSKNSNSTVKKKKKRARKGRDEIDDIFG). The segment covering 181–201 (TKRKSKNSNSTVKKKKKRARK) has biased composition (basic residues).

Component of RNase MRP complex which consists of an RNA moiety and at least 10 protein subunits.

The protein localises to the membrane. The protein resides in the nucleus. It localises to the nucleolus. In terms of biological role, functions as part of ribonuclease MRP (RNase MRP), which is involved in rRNA processing in mitochondria. In Schizosaccharomyces pombe (strain 972 / ATCC 24843) (Fission yeast), this protein is Ribonuclease MRP protein subunit rmp1.